Here is a 208-residue protein sequence, read N- to C-terminus: Dephospho-CoA kinase (208 aa).

In terms of domain architecture, DPCK spans 8 to 208 (LVGVTGGIGS…VYQSLLTVVE (201 aa)). 16-21 (GSGKST) contacts ATP.

Belongs to the CoaE family.

It is found in the cytoplasm. It carries out the reaction 3'-dephospho-CoA + ATP = ADP + CoA + H(+). The protein operates within cofactor biosynthesis; coenzyme A biosynthesis; CoA from (R)-pantothenate: step 5/5. In terms of biological role, catalyzes the phosphorylation of the 3'-hydroxyl group of dephosphocoenzyme A to form coenzyme A. The polypeptide is Dephospho-CoA kinase (Chlorobaculum tepidum (strain ATCC 49652 / DSM 12025 / NBRC 103806 / TLS) (Chlorobium tepidum)).